The following is a 309-amino-acid chain: Electron transfer flavoprotein subunit alpha (309 aa).

253–281 (LYIAVGISGAIQHLAGMKDSKVIVAINKD) is an FAD binding site.

This sequence belongs to the ETF alpha-subunit/FixB family. Heterodimer of an alpha and a beta subunit. It depends on FAD as a cofactor.

The electron transfer flavoprotein serves as a specific electron acceptor for other dehydrogenases. It transfers the electrons to the main respiratory chain via ETF-ubiquinone oxidoreductase (ETF dehydrogenase). This chain is Electron transfer flavoprotein subunit alpha (etfA), found in Pseudomonas aeruginosa (strain ATCC 15692 / DSM 22644 / CIP 104116 / JCM 14847 / LMG 12228 / 1C / PRS 101 / PAO1).